A 293-amino-acid polypeptide reads, in one-letter code: Ribosomal protein L11 methyltransferase (293 aa).

S-adenosyl-L-methionine is bound by residues Thr145, Gly166, Asp188, and Asn230.

This sequence belongs to the methyltransferase superfamily. PrmA family.

It is found in the cytoplasm. It carries out the reaction L-lysyl-[protein] + 3 S-adenosyl-L-methionine = N(6),N(6),N(6)-trimethyl-L-lysyl-[protein] + 3 S-adenosyl-L-homocysteine + 3 H(+). Its function is as follows. Methylates ribosomal protein L11. The chain is Ribosomal protein L11 methyltransferase from Salmonella heidelberg (strain SL476).